A 342-amino-acid polypeptide reads, in one-letter code: Phosphoribosylformylglycinamidine cyclo-ligase (342 aa).

The protein belongs to the AIR synthase family.

Its subcellular location is the cytoplasm. It catalyses the reaction 2-formamido-N(1)-(5-O-phospho-beta-D-ribosyl)acetamidine + ATP = 5-amino-1-(5-phospho-beta-D-ribosyl)imidazole + ADP + phosphate + H(+). It functions in the pathway purine metabolism; IMP biosynthesis via de novo pathway; 5-amino-1-(5-phospho-D-ribosyl)imidazole from N(2)-formyl-N(1)-(5-phospho-D-ribosyl)glycinamide: step 2/2. The sequence is that of Phosphoribosylformylglycinamidine cyclo-ligase from Gloeothece citriformis (strain PCC 7424) (Cyanothece sp. (strain PCC 7424)).